The following is a 382-amino-acid chain: Anhydro-N-acetylmuramic acid kinase (382 aa).

9–16 contacts ATP; that stretch reads GTSLDGID.

It belongs to the anhydro-N-acetylmuramic acid kinase family.

The catalysed reaction is 1,6-anhydro-N-acetyl-beta-muramate + ATP + H2O = N-acetyl-D-muramate 6-phosphate + ADP + H(+). Its pathway is amino-sugar metabolism; 1,6-anhydro-N-acetylmuramate degradation. It participates in cell wall biogenesis; peptidoglycan recycling. Its function is as follows. Catalyzes the specific phosphorylation of 1,6-anhydro-N-acetylmuramic acid (anhMurNAc) with the simultaneous cleavage of the 1,6-anhydro ring, generating MurNAc-6-P. Is required for the utilization of anhMurNAc either imported from the medium or derived from its own cell wall murein, and thus plays a role in cell wall recycling. The chain is Anhydro-N-acetylmuramic acid kinase from Bacillus cereus (strain ZK / E33L).